The following is a 135-amino-acid chain: Beta/delta-urticatoxin-Ui2a (135 aa).

A signal peptide spans 1–18 (MGAIVLVAIMALVASSSA). The propeptide occupies 19–72 (FSDDEQNMMNAEGEKGIRSYSAADDVSDMIESLFVNSGNRNLVLMMLSGRPQPN). Intrachain disulfides connect C75–C92, C82–C97, C91–C105, C107–C121, C114–C126, and C120–C134.

This sequence belongs to the urticatoxin-2 family. Expressed in trichomes, that are stiff epidermal hairs located on the surface of petioles and leaves.

The protein localises to the secreted. Its function is as follows. Plant defense neurotoxin that causes pain and systemic symptoms in mammals via modulation of voltage-gated sodium channels (Nav). Potent modulator of human Nav1.5/SCN5A (EC(50)=55 nM), Nav1.6/SCN8A (EC(50)=0.86 nM), and Nav1.7/SCN9A (EC(50)=208 nM), where it shifts the activation threshold to more negative potentials and delays fast inactivation. Also shifts the voltage-dependence of steady-state fast inactivation of Nav1.6/SCN8A, but not that of Nav1.5/SCN5A or Nav1.7/SCN9A. On Nav1.7/SCN9A, principally acts by binding to extracellular loops of domain IV (Nav site 3). In vivo, intraplantar injection into mice causes numerous dose-dependent, immediate, and long-lasting spontaneous pain behaviors, while no swelling is observed in the injected paw. At the highest doses tested, systemic symptoms including hypokinesia and hypersalivation are observed. The polypeptide is Beta/delta-urticatoxin-Ui2a (Urtica incisa (Scrub nettle)).